The chain runs to 292 residues: Pyridoxal 5'-phosphate synthase subunit PdxS (292 aa).

Position 22 (aspartate 22) interacts with D-ribose 5-phosphate. The active-site Schiff-base intermediate with D-ribose 5-phosphate is the lysine 79. Glycine 151 serves as a coordination point for D-ribose 5-phosphate. Arginine 163 serves as a coordination point for D-glyceraldehyde 3-phosphate. Residues glycine 212 and glycine 233–serine 234 contribute to the D-ribose 5-phosphate site.

It belongs to the PdxS/SNZ family. In terms of assembly, in the presence of PdxT, forms a dodecamer of heterodimers.

It carries out the reaction aldehydo-D-ribose 5-phosphate + D-glyceraldehyde 3-phosphate + L-glutamine = pyridoxal 5'-phosphate + L-glutamate + phosphate + 3 H2O + H(+). The protein operates within cofactor biosynthesis; pyridoxal 5'-phosphate biosynthesis. Functionally, catalyzes the formation of pyridoxal 5'-phosphate from ribose 5-phosphate (RBP), glyceraldehyde 3-phosphate (G3P) and ammonia. The ammonia is provided by the PdxT subunit. Can also use ribulose 5-phosphate and dihydroxyacetone phosphate as substrates, resulting from enzyme-catalyzed isomerization of RBP and G3P, respectively. The sequence is that of Pyridoxal 5'-phosphate synthase subunit PdxS from Thermoanaerobacter sp. (strain X514).